Here is a 694-residue protein sequence, read N- to C-terminus: Elongation factor G (694 aa).

The region spanning 9–288 is the tr-type G domain; sequence SKIRNIGIMA…VIVKWLPSPK (280 aa). Residues 18-25, 82-86, and 136-139 each bind GTP; these read AHIDAGKT, DTPGH, and NKMD.

This sequence belongs to the TRAFAC class translation factor GTPase superfamily. Classic translation factor GTPase family. EF-G/EF-2 subfamily.

It is found in the cytoplasm. Catalyzes the GTP-dependent ribosomal translocation step during translation elongation. During this step, the ribosome changes from the pre-translocational (PRE) to the post-translocational (POST) state as the newly formed A-site-bound peptidyl-tRNA and P-site-bound deacylated tRNA move to the P and E sites, respectively. Catalyzes the coordinated movement of the two tRNA molecules, the mRNA and conformational changes in the ribosome. The polypeptide is Elongation factor G (Chlamydia caviae (strain ATCC VR-813 / DSM 19441 / 03DC25 / GPIC) (Chlamydophila caviae)).